We begin with the raw amino-acid sequence, 409 residues long: DNA double-strand break repair protein Mre11 (409 aa).

D9, H11, D50, and E85 together coordinate Mn(2+). H86 (proton donor) is an active-site residue. Mn(2+) is bound by residues H170, H199, and H201.

It belongs to the MRE11/RAD32 family. As to quaternary structure, homodimer. Forms a heterotetramer composed of two Mre11 subunits and two Rad50 subunits. Mn(2+) serves as cofactor.

Nuclease activity is regulated by Rad50. Its function is as follows. Part of the Rad50/Mre11 complex, which is involved in the early steps of DNA double-strand break (DSB) repair. The complex may facilitate opening of the processed DNA ends to aid in the recruitment of HerA and NurA. Mre11 binds to DSB ends and has both double-stranded 3'-5' exonuclease activity and single-stranded endonuclease activity. This is DNA double-strand break repair protein Mre11 from Aeropyrum pernix (strain ATCC 700893 / DSM 11879 / JCM 9820 / NBRC 100138 / K1).